The sequence spans 115 residues: U3-lycotoxin-Ls1k (115 aa).

An N-terminal signal peptide occupies residues 1–20; that stretch reads MKFVLLFGVLLVTLFSYSSA. The propeptide occupies 21–44; sequence EMLDDFDQADEDELLSLIEKEEAR. Cystine bridges form between cysteine 48–cysteine 63, cysteine 55–cysteine 72, cysteine 62–cysteine 87, and cysteine 74–cysteine 85.

The protein belongs to the neurotoxin 19 (CSTX) family. 01 subfamily. As to expression, expressed by the venom gland.

It is found in the secreted. The polypeptide is U3-lycotoxin-Ls1k (Lycosa singoriensis (Wolf spider)).